We begin with the raw amino-acid sequence, 365 residues long: tRNA 2-selenouridine synthase (365 aa).

The Rhodanese domain maps to 12–136 (FLHDVPLLDV…LRMFLIDTTQ (125 aa)). Residue Cys-95 is the S-selanylcysteine intermediate of the active site.

It belongs to the SelU family. As to quaternary structure, monomer.

The catalysed reaction is 5-methylaminomethyl-2-thiouridine(34) in tRNA + selenophosphate + (2E)-geranyl diphosphate + H2O + H(+) = 5-methylaminomethyl-2-selenouridine(34) in tRNA + (2E)-thiogeraniol + phosphate + diphosphate. It catalyses the reaction 5-methylaminomethyl-2-thiouridine(34) in tRNA + (2E)-geranyl diphosphate = 5-methylaminomethyl-S-(2E)-geranyl-thiouridine(34) in tRNA + diphosphate. It carries out the reaction 5-methylaminomethyl-S-(2E)-geranyl-thiouridine(34) in tRNA + selenophosphate + H(+) = 5-methylaminomethyl-2-(Se-phospho)selenouridine(34) in tRNA + (2E)-thiogeraniol. The enzyme catalyses 5-methylaminomethyl-2-(Se-phospho)selenouridine(34) in tRNA + H2O = 5-methylaminomethyl-2-selenouridine(34) in tRNA + phosphate. In terms of biological role, involved in the post-transcriptional modification of the uridine at the wobble position (U34) of tRNA(Lys), tRNA(Glu) and tRNA(Gln). Catalyzes the conversion of 2-thiouridine (S2U-RNA) to 2-selenouridine (Se2U-RNA). Acts in a two-step process involving geranylation of 2-thiouridine (S2U) to S-geranyl-2-thiouridine (geS2U) and subsequent selenation of the latter derivative to 2-selenouridine (Se2U) in the tRNA chain. This chain is tRNA 2-selenouridine synthase, found in Verminephrobacter eiseniae (strain EF01-2).